The chain runs to 864 residues: MKKEYSCKEIERFVQKHWEINDTFKVLEDSKKDKYYCVSMMPYPSGKLHMGHVRNYVLGDVIARYQRMLGKNVLHPIGWDAFGLPAETAAINNKISPEKWTISSIEYMKNQLKLLGCSYDWSREIITCDPKYYKWEQLLFTKLYNKNKAYKKKSIVNWCPKDKTVLANEQVIDNLCWRCSSNIEMKKIFQWFIKITDYADELLNDLNDLKLWPKKVKVMQRNWIGKSKGIDVLFHIKDTNEKILIYVSKLEIFMGITFIVISKEHKLIKFIENKLPSIAKLIKNYNNEKTLELNLRKKTKDGIFTSLFAIHPISKKILPIWISNFFFTNNDIYQSIAAIPAYNKNELDFAKKYNLPIRYVIKDYFEKIIDFKKYNNLKEGILFNSNIFNGLNLKNGYDRISKFLISNKIGKRSTHYKLRDWCISRQRYWGAPIPVLITKENKILVVSENELPVILPKAKNNNIIHSLNSYKDWIYVLNDNKLVKREVDTFDTFMESSWYLHRYTCTKYTKDILDPNATNYWFPVDQYIGGIEHATMHLLYLRFYHKILRDMNFVKCDEPVNRLLCQGMVLSDTFYYFSKSGNKIWTSPKNKNFERNKDNKIINAIDSLGNKLTHIGMSKMSKSKNNGVDPQGIINKYGSDTLRLFIMFAAPPELSLEWSDKGIIGANRFIKKLWKITYNYLNLKKNNNYVFYKKLKEQDNILLEKSFYVINKVTKDIDKNQTFNTAIAEIMKLTNHLNSYINKNEYNNISIIKKVLMIIIRLLYPFIPHVCFVLWNEINKNNDIDKTKWPKIKMPFIKNKKKNIVVQINGKLKTVISFDISCNEFLIKKCVIENNKIKNLLNKKKIKNIIYVKNKIINIVLDDK.

The 'HIGH' region signature appears at P42–H52. The short motif at K619 to S623 is the 'KMSKS' region element. K622 contributes to the ATP binding site.

Belongs to the class-I aminoacyl-tRNA synthetase family.

Its subcellular location is the cytoplasm. The enzyme catalyses tRNA(Leu) + L-leucine + ATP = L-leucyl-tRNA(Leu) + AMP + diphosphate. The polypeptide is Leucine--tRNA ligase (Wigglesworthia glossinidia brevipalpis).